A 339-amino-acid chain; its full sequence is MVIVKSWQKIFTLLVVLLLCIGCSKVPSTSYNPWAVVSLPTEAKLLDIAFTENPQHGFLVGSSATLLETNDGGNNWQPLNLALDDDRYRFDSVSFAGKEGWIVGEPSLLLHTTDEGRSWSRIPLSEKLPGNPIAIQALGTDIAEMATDVGAIYKTTDGGKNWKAQVEAAVGVVRNLERSVDGKYVAVSAKGSFYSTWEAGQNAWVPHNRNSSRRVENMGFSQDGLWLLARGGQVQFSDPANPDEWLDAETPELATSWGLLDMAYRTPNEVWIGGGSGNLLVSTDGGKTWEKDRDVEEVAANFYKVVFLKPDQGFVIGDRGVLLKYQPEAAKTATTEPAA.

Residues 1 to 22 (MVIVKSWQKIFTLLVVLLLCIG) form the signal peptide. Residue C23 is the site of N-palmitoyl cysteine attachment. C23 carries the S-diacylglycerol cysteine lipid modification.

This sequence belongs to the Ycf48 family. As to quaternary structure, part of early PSII assembly complexes which includes D1 (psbA) and PsbI; not found in mature PSII. Binds to the lumenal side of PSII complexes. Interacts with YidC.

It localises to the cellular thylakoid membrane. In terms of biological role, a factor required for optimal assembly of photosystem II (PSII), acting in the early stages of PSII assembly. Also plays a role in replacement of photodamaged D1 (psbA). Assists YidC in synthesis of chlorophyll-binding proteins. This is Photosystem II assembly lipoprotein Ycf48 from Nostoc sp. (strain PCC 7120 / SAG 25.82 / UTEX 2576).